The following is a 209-amino-acid chain: ATP-dependent Clp protease proteolytic subunit 1 (209 aa).

Ser109 serves as the catalytic Nucleophile. His134 is an active-site residue.

Belongs to the peptidase S14 family. Fourteen ClpP subunits assemble into 2 heptameric rings which stack back to back to give a disk-like structure with a central cavity, resembling the structure of eukaryotic proteasomes.

It localises to the cytoplasm. The enzyme catalyses Hydrolysis of proteins to small peptides in the presence of ATP and magnesium. alpha-casein is the usual test substrate. In the absence of ATP, only oligopeptides shorter than five residues are hydrolyzed (such as succinyl-Leu-Tyr-|-NHMec, and Leu-Tyr-Leu-|-Tyr-Trp, in which cleavage of the -Tyr-|-Leu- and -Tyr-|-Trp bonds also occurs).. In terms of biological role, cleaves peptides in various proteins in a process that requires ATP hydrolysis. Has a chymotrypsin-like activity. Plays a major role in the degradation of misfolded proteins. The sequence is that of ATP-dependent Clp protease proteolytic subunit 1 from Corynebacterium diphtheriae (strain ATCC 700971 / NCTC 13129 / Biotype gravis).